We begin with the raw amino-acid sequence, 248 residues long: PF03932 family protein CutC (248 aa).

Belongs to the CutC family. In terms of assembly, homodimer.

It localises to the cytoplasm. In Salmonella heidelberg (strain SL476), this protein is PF03932 family protein CutC.